A 61-amino-acid chain; its full sequence is Venom protein 22.1 (61 aa).

Residues methionine 1 to glycine 18 form the signal peptide.

The protein belongs to the non-disulfide-bridged peptide (NDBP) superfamily. Long chain multifunctional peptide (group 2) family. As to expression, expressed by the venom gland.

Its subcellular location is the secreted. This Lychas mucronatus (Chinese swimming scorpion) protein is Venom protein 22.1.